We begin with the raw amino-acid sequence, 392 residues long: Phosphoglycerate kinase (392 aa).

Substrate contacts are provided by residues 21–23 (DFN), arginine 36, 59–62 (HLGR), arginine 113, and arginine 146. Residues lysine 197, glutamate 319, and 345 to 348 (GGDT) each bind ATP.

Belongs to the phosphoglycerate kinase family. As to quaternary structure, monomer.

It localises to the cytoplasm. The catalysed reaction is (2R)-3-phosphoglycerate + ATP = (2R)-3-phospho-glyceroyl phosphate + ADP. The protein operates within carbohydrate degradation; glycolysis; pyruvate from D-glyceraldehyde 3-phosphate: step 2/5. This chain is Phosphoglycerate kinase, found in Francisella tularensis subsp. holarctica (strain FTNF002-00 / FTA).